The following is a 293-amino-acid chain: Haloalkane dehalogenase (293 aa).

The 125-residue stretch at P34–G158 folds into the AB hydrolase-1 domain. D106 acts as the Nucleophile in catalysis. The Proton donor role is filled by E130. H272 functions as the Proton acceptor in the catalytic mechanism.

It belongs to the haloalkane dehalogenase family. Type 2 subfamily. Monomer.

The enzyme catalyses 1-haloalkane + H2O = a halide anion + a primary alcohol + H(+). It participates in xenobiotic degradation; haloalkane degradation. The protein operates within xenobiotic degradation; 1,3-dichloropropene degradation. Functionally, catalyzes hydrolytic cleavage of carbon-halogen bonds in halogenated aliphatic compounds, leading to the formation of the corresponding primary alcohols, halide ions and protons. Has a broad substrate specificity, as it is able to dehalogenate mono- and di- chlorinated and brominated alkanes (up to at least C10), and the two isomers of 1,3-dichloropropene to 3-chloroallyl alcohol; the highest activity was found with 1,2-dibromoethane, while no activity was observed with the analog 1,2-dichloroethane. In Pseudomonas pavonaceae, this protein is Haloalkane dehalogenase (dhaA).